Consider the following 499-residue polypeptide: Glutamate--tRNA ligase (499 aa).

A 'HIGH' region motif is present at residues Pro-10 to Met-20. A 'KMSKS' region motif is present at residues Lys-255 to Arg-259. Lys-258 serves as a coordination point for ATP.

Belongs to the class-I aminoacyl-tRNA synthetase family. Glutamate--tRNA ligase type 1 subfamily. In terms of assembly, monomer.

It is found in the cytoplasm. It catalyses the reaction tRNA(Glu) + L-glutamate + ATP = L-glutamyl-tRNA(Glu) + AMP + diphosphate. Its function is as follows. Catalyzes the attachment of glutamate to tRNA(Glu) in a two-step reaction: glutamate is first activated by ATP to form Glu-AMP and then transferred to the acceptor end of tRNA(Glu). This is Glutamate--tRNA ligase from Corynebacterium urealyticum (strain ATCC 43042 / DSM 7109).